Reading from the N-terminus, the 142-residue chain is Universal stress protein C (142 aa).

It belongs to the universal stress protein A family.

Its subcellular location is the cytoplasm. Functionally, required for resistance to DNA-damaging agents. In Escherichia coli (strain K12), this protein is Universal stress protein C (uspC).